The primary structure comprises 279 residues: Tryptophan 2,3-dioxygenase (279 aa).

Residues 48 to 52 (FIIQH), tyrosine 110, and arginine 114 each bind substrate. Histidine 237 contributes to the heme binding site. Threonine 251 is a binding site for substrate.

The protein belongs to the tryptophan 2,3-dioxygenase family. Homotetramer. It depends on heme as a cofactor.

It carries out the reaction L-tryptophan + O2 = N-formyl-L-kynurenine. It functions in the pathway amino-acid degradation; L-tryptophan degradation via kynurenine pathway; L-kynurenine from L-tryptophan: step 1/2. Functionally, heme-dependent dioxygenase that catalyzes the oxidative cleavage of the L-tryptophan (L-Trp) pyrrole ring and converts L-tryptophan to N-formyl-L-kynurenine. Catalyzes the oxidative cleavage of the indole moiety. The polypeptide is Tryptophan 2,3-dioxygenase (Bradyrhizobium sp. (strain ORS 278)).